The chain runs to 215 residues: Octanoyltransferase (215 aa).

A BPL/LPL catalytic domain is found at glutamine 42–glutamine 215. Substrate is bound by residues arginine 81–histidine 88, alanine 148–glycine 150, and glycine 161–alanine 163. The active-site Acyl-thioester intermediate is cysteine 179.

This sequence belongs to the LipB family.

The protein resides in the cytoplasm. The enzyme catalyses octanoyl-[ACP] + L-lysyl-[protein] = N(6)-octanoyl-L-lysyl-[protein] + holo-[ACP] + H(+). It participates in protein modification; protein lipoylation via endogenous pathway; protein N(6)-(lipoyl)lysine from octanoyl-[acyl-carrier-protein]: step 1/2. In terms of biological role, catalyzes the transfer of endogenously produced octanoic acid from octanoyl-acyl-carrier-protein onto the lipoyl domains of lipoate-dependent enzymes. Lipoyl-ACP can also act as a substrate although octanoyl-ACP is likely to be the physiological substrate. The chain is Octanoyltransferase from Nitrosospira multiformis (strain ATCC 25196 / NCIMB 11849 / C 71).